The chain runs to 443 residues: Thymidine phosphorylase (443 aa).

Belongs to the thymidine/pyrimidine-nucleoside phosphorylase family. Homodimer.

The catalysed reaction is thymidine + phosphate = 2-deoxy-alpha-D-ribose 1-phosphate + thymine. It functions in the pathway pyrimidine metabolism; dTMP biosynthesis via salvage pathway; dTMP from thymine: step 1/2. The enzymes which catalyze the reversible phosphorolysis of pyrimidine nucleosides are involved in the degradation of these compounds and in their utilization as carbon and energy sources, or in the rescue of pyrimidine bases for nucleotide synthesis. This is Thymidine phosphorylase from Shewanella sediminis (strain HAW-EB3).